The primary structure comprises 1257 residues: ATP-binding cassette sub-family B member 5 (1257 aa).

The disordered stretch occupies residues 1–24; that stretch reads MENSERAEEMQENYQRNGTAEEQP. N-linked (GlcNAc...) asparagine glycosylation is present at Asn-17. A helical membrane pass occupies residues 49–69; that stretch reads ILGILASLVNGACLPLMPLVL. An ABC transmembrane type-1 1 domain is found at 49–350; the sequence is ILGILASLVN…AAVPHFETFA (302 aa). Asn-85 and Asn-91 each carry an N-linked (GlcNAc...) asparagine glycan. 5 helical membrane-spanning segments follow: residues 110 to 130, 181 to 201, 203 to 223, 294 to 314, and 322 to 342; these read YVGI…LWII, KIAL…VGLV, GWKL…SAAA, VYFF…SLIL, and IGTV…IGAA. N-linked (GlcNAc...) asparagine glycosylation is found at Asn-371, Asn-390, and Asn-423. The region spanning 386–622 is the ABC transporter 1 domain; that stretch reads VEFKNVSFNY…RGLYYSLVMS (237 aa). 421–428 lines the ATP pocket; that stretch reads GLNGSGKS. 2 helical membrane-spanning segments follow: residues 693-713 and 737-757; these read VLGT…SIIF and MIFV…GLFY. The ABC transmembrane type-1 2 domain occupies 693 to 980; the sequence is VLGTLASVLN…TLVLAPEYSK (288 aa). Residues Asn-789 and Asn-819 are each glycosylated (N-linked (GlcNAc...) asparagine). A helical membrane pass occupies residues 827-847; it reads VIISFIYGWEMTFLILSIAPV. N-linked (GlcNAc...) asparagine glycosylation is present at Asn-910. 2 helical membrane passes run 917-937 and 954-974; these read IIGS…AAGF and MFIV…TLVL. The 239-residue stretch at 1015-1253 folds into the ABC transporter 2 domain; sequence LEFREVSFFY…RDIYFKLVNA (239 aa). Position 1050 to 1057 (1050 to 1057) interacts with ATP; it reads GSSGCGKS. Asn-1104 and Asn-1188 each carry an N-linked (GlcNAc...) asparagine glycan.

Belongs to the ABC transporter superfamily. ABCB family. Multidrug resistance exporter (TC 3.A.1.201) subfamily. In terms of tissue distribution, expressed by CD133-expressing progenitor cells among epidermal melanocytes (at protein level). Widely expressed with specific expression in pigment cells. Highly expressed in several malignant tissues: highly expressed in clinical melanomas, with low expression in normal skin. In melanoma, marks malignant melanoma-initiating cells (MMIC), in which clinical virulence resides as a consequence of unlimited self-renewal capacity, resulting in inexorable tumor progression and metastasis. Also highly expressed in a number of leukemia cells. Expressed in basal limbal epithelium.

It localises to the cell membrane. The catalysed reaction is daunorubicin(in) + ATP + H2O = daunorubicin(out) + ADP + phosphate + H(+). In terms of biological role, energy-dependent efflux transporter responsible for decreased drug accumulation in multidrug-resistant cells. Specifically present in limbal stem cells, where it plays a key role in corneal development and repair. The polypeptide is ATP-binding cassette sub-family B member 5 (Homo sapiens (Human)).